The sequence spans 302 residues: UDP-3-O-acyl-N-acetylglucosamine deacetylase (302 aa).

Residues histidine 78, histidine 235, and aspartate 239 each coordinate Zn(2+). Histidine 262 functions as the Proton donor in the catalytic mechanism.

The protein belongs to the LpxC family. Zn(2+) is required as a cofactor.

The enzyme catalyses a UDP-3-O-[(3R)-3-hydroxyacyl]-N-acetyl-alpha-D-glucosamine + H2O = a UDP-3-O-[(3R)-3-hydroxyacyl]-alpha-D-glucosamine + acetate. The protein operates within glycolipid biosynthesis; lipid IV(A) biosynthesis; lipid IV(A) from (3R)-3-hydroxytetradecanoyl-[acyl-carrier-protein] and UDP-N-acetyl-alpha-D-glucosamine: step 2/6. Its function is as follows. Catalyzes the hydrolysis of UDP-3-O-myristoyl-N-acetylglucosamine to form UDP-3-O-myristoylglucosamine and acetate, the committed step in lipid A biosynthesis. The polypeptide is UDP-3-O-acyl-N-acetylglucosamine deacetylase (Bdellovibrio bacteriovorus (strain ATCC 15356 / DSM 50701 / NCIMB 9529 / HD100)).